Consider the following 298-residue polypeptide: Small ribosomal subunit biogenesis GTPase RsgA 1 (298 aa).

One can recognise a CP-type G domain in the interval 63 to 224 (QTQLVRPPVA…VADTPGFSSY (162 aa)). Residues 112-115 (AKTD) and 167-175 (GQTGAGKST) contribute to the GTP site. Zn(2+)-binding residues include cysteine 248, cysteine 253, histidine 255, and cysteine 261.

It belongs to the TRAFAC class YlqF/YawG GTPase family. RsgA subfamily. As to quaternary structure, monomer. Associates with 30S ribosomal subunit, binds 16S rRNA. Requires Zn(2+) as cofactor.

It localises to the cytoplasm. In terms of biological role, one of several proteins that assist in the late maturation steps of the functional core of the 30S ribosomal subunit. Helps release RbfA from mature subunits. May play a role in the assembly of ribosomal proteins into the subunit. Circularly permuted GTPase that catalyzes slow GTP hydrolysis, GTPase activity is stimulated by the 30S ribosomal subunit. This chain is Small ribosomal subunit biogenesis GTPase RsgA 1, found in Lactiplantibacillus plantarum (strain ATCC BAA-793 / NCIMB 8826 / WCFS1) (Lactobacillus plantarum).